Here is a 410-residue protein sequence, read N- to C-terminus: E3 SUMO-protein ligase EGR2 (410 aa).

A compositionally biased stretch (low complexity) spans 68–83; the sequence is PPASTTASSSVTSASP. Disordered regions lie at residues 68 to 95, 101 to 120, and 127 to 151; these read PPASTTASSSVTSASPNPLATGPLGVCT, PELDHLYSPPPPPPPYSGCT, and PSAFLSPPTTSTSSLAYQPPPSYPS. Residues 104 to 107 carry the HCFC1-binding-motif (HBM) motif; that stretch reads DHLY. Residues 127 to 143 are compositionally biased toward low complexity; it reads PSAFLSPPTTSTSSLAY. Lys-188 carries the post-translational modification N6-acetyllysine. Residues 217-286 are disordered; sequence PSAGVTGPGA…PYPCPAEGCD (70 aa). Residues 222 to 231 show a composition bias toward gly residues; the sequence is TGPGASGGSE. The segment covering 237 to 248 has biased composition (polar residues); the sequence is GSGSAAVTTSPY. 3 C2H2-type zinc fingers span residues 278-302, 308-330, and 336-358; these read YPCPAEGCDRRFSRSDELTRHIRIH, FQCRICMRNFSRSDHLTTHIRTH, and FACDYCGRKFARSDERKRHTKIH. The segment at 349–410 is disordered; it reads DERKRHTKIH…LACTSRTRTP (62 aa). Positions 353-363 are enriched in basic residues; it reads RHTKIHLRQKE. The span at 367–380 shows a compositional bias: low complexity; that stretch reads SAPSSSASAQPSAS.

The protein belongs to the EGR C2H2-type zinc-finger protein family. In terms of assembly, interacts with HCFC1. Interacts with WWP2. Interacts with UBC9. Interacts with CITED1. Interacts (via phosphorylated form) with SFN. Ubiquitinated by WWP2 leading to proteasomal degradation. In terms of processing, acetylated. May be deacetylated by HDAC6, HDAC10 or SIRT1.

The protein resides in the nucleus. Its pathway is protein modification; protein sumoylation. In terms of biological role, sequence-specific DNA-binding transcription factor. Plays a role in hindbrain segmentation by regulating the expression of a subset of homeobox containing genes and in Schwann cell myelination by regulating the expression of genes involved in the formation and maintenance of myelin. Binds to two EGR2-consensus sites EGR2A (5'-CTGTAGGAG-3') and EGR2B (5'-ATGTAGGTG-3') in the HOXB3 enhancer and promotes HOXB3 transcriptional activation. Binds to specific DNA sites located in the promoter region of HOXA4, HOXB2 and ERBB2. Regulates hindbrain segmentation by controlling the expression of Hox genes, such as HOXA4, HOXB3 and HOXB2, and thereby specifying odd and even rhombomeres. Promotes the expression of HOXB3 in the rhombomere r5 in the hindbrain. Regulates myelination in the peripheral nervous system after birth, possibly by regulating the expression of myelin proteins, such as MPZ, and by promoting the differentiation of Schwann cells. Involved in the development of the jaw openener musculature, probably by playing a role in its innervation through trigeminal motor neurons. May play a role in adipogenesis, possibly by regulating the expression of CEBPB. Functionally, E3 SUMO-protein ligase helping SUMO1 conjugation to its coregulators NAB1 and NAB2, whose sumoylation down-regulates EGR2 transcriptional activity. The polypeptide is E3 SUMO-protein ligase EGR2 (EGR2) (Cricetulus griseus (Chinese hamster)).